Reading from the N-terminus, the 156-residue chain is ATP synthase subunit b (156 aa).

Residues 7–27 form a helical membrane-spanning segment; the sequence is FFAQMVVFFILWWVVAKFIWP.

It belongs to the ATPase B chain family. As to quaternary structure, F-type ATPases have 2 components, F(1) - the catalytic core - and F(0) - the membrane proton channel. F(1) has five subunits: alpha(3), beta(3), gamma(1), delta(1), epsilon(1). F(0) has three main subunits: a(1), b(2) and c(10-14). The alpha and beta chains form an alternating ring which encloses part of the gamma chain. F(1) is attached to F(0) by a central stalk formed by the gamma and epsilon chains, while a peripheral stalk is formed by the delta and b chains.

The protein localises to the cell inner membrane. Functionally, f(1)F(0) ATP synthase produces ATP from ADP in the presence of a proton or sodium gradient. F-type ATPases consist of two structural domains, F(1) containing the extramembraneous catalytic core and F(0) containing the membrane proton channel, linked together by a central stalk and a peripheral stalk. During catalysis, ATP synthesis in the catalytic domain of F(1) is coupled via a rotary mechanism of the central stalk subunits to proton translocation. Component of the F(0) channel, it forms part of the peripheral stalk, linking F(1) to F(0). This Cupriavidus necator (strain ATCC 17699 / DSM 428 / KCTC 22496 / NCIMB 10442 / H16 / Stanier 337) (Ralstonia eutropha) protein is ATP synthase subunit b.